A 415-amino-acid chain; its full sequence is Gamma-glutamyl phosphate reductase (415 aa).

The protein belongs to the gamma-glutamyl phosphate reductase family.

The protein resides in the cytoplasm. It catalyses the reaction L-glutamate 5-semialdehyde + phosphate + NADP(+) = L-glutamyl 5-phosphate + NADPH + H(+). Its pathway is amino-acid biosynthesis; L-proline biosynthesis; L-glutamate 5-semialdehyde from L-glutamate: step 2/2. Its function is as follows. Catalyzes the NADPH-dependent reduction of L-glutamate 5-phosphate into L-glutamate 5-semialdehyde and phosphate. The product spontaneously undergoes cyclization to form 1-pyrroline-5-carboxylate. This is Gamma-glutamyl phosphate reductase from Thermotoga petrophila (strain ATCC BAA-488 / DSM 13995 / JCM 10881 / RKU-1).